We begin with the raw amino-acid sequence, 147 residues long: D-aminoacyl-tRNA deacylase (147 aa).

The Gly-cisPro motif, important for rejection of L-amino acids motif lies at 136–137 (GP).

Belongs to the DTD family. Homodimer.

The protein localises to the cytoplasm. It catalyses the reaction glycyl-tRNA(Ala) + H2O = tRNA(Ala) + glycine + H(+). The catalysed reaction is a D-aminoacyl-tRNA + H2O = a tRNA + a D-alpha-amino acid + H(+). Its function is as follows. An aminoacyl-tRNA editing enzyme that deacylates mischarged D-aminoacyl-tRNAs. Also deacylates mischarged glycyl-tRNA(Ala), protecting cells against glycine mischarging by AlaRS. Acts via tRNA-based rather than protein-based catalysis; rejects L-amino acids rather than detecting D-amino acids in the active site. By recycling D-aminoacyl-tRNA to D-amino acids and free tRNA molecules, this enzyme counteracts the toxicity associated with the formation of D-aminoacyl-tRNA entities in vivo and helps enforce protein L-homochirality. The chain is D-aminoacyl-tRNA deacylase from Streptococcus pyogenes serotype M1.